Consider the following 163-residue polypeptide: Small heat shock protein C4 (163 aa).

The sHSP domain occupies 53 to 163 (YNNKILSPRT…QSKAKKIKIS (111 aa)).

This sequence belongs to the small heat shock protein (HSP20) family.

This chain is Small heat shock protein C4 (hspc4-1), found in Rickettsia felis (strain ATCC VR-1525 / URRWXCal2) (Rickettsia azadi).